Here is a 28-residue protein sequence, read N- to C-terminus: U1-poneritoxin-Da4a (28 aa).

Ala-28 bears the Alanine amide mark.

Expressed by the venom gland.

It localises to the secreted. Shows a broad spectrum of activity against both Gram-positive and Gram-negative bacteria. Also has antimicrobial activity against S.cerevisiae. Has insecticidal and non-hemolytic activity. The protein is U1-poneritoxin-Da4a of Dinoponera australis (Giant neotropical hunting ant).